The primary structure comprises 708 residues: Ribosomal RNA large subunit methyltransferase K/L (708 aa).

One can recognise a THUMP domain in the interval 43–154; that stretch reads QGYQITLWTR…RGKITIGINF (112 aa).

This sequence belongs to the methyltransferase superfamily. RlmKL family.

The protein resides in the cytoplasm. It catalyses the reaction guanosine(2445) in 23S rRNA + S-adenosyl-L-methionine = N(2)-methylguanosine(2445) in 23S rRNA + S-adenosyl-L-homocysteine + H(+). The enzyme catalyses guanosine(2069) in 23S rRNA + S-adenosyl-L-methionine = N(2)-methylguanosine(2069) in 23S rRNA + S-adenosyl-L-homocysteine + H(+). Specifically methylates the guanine in position 2445 (m2G2445) and the guanine in position 2069 (m7G2069) of 23S rRNA. This Shewanella amazonensis (strain ATCC BAA-1098 / SB2B) protein is Ribosomal RNA large subunit methyltransferase K/L.